The primary structure comprises 261 residues: Rho-related GTP-binding protein RhoU (261 aa).

Positions 1-48 are disordered; sequence MAPQQGRPALPARCEPPAAPPVPPRRERGGRGARGPGVSGGRGRAGGA. The segment covering 7-16 has biased composition (low complexity); the sequence is RPALPARCEP. Residues 32 to 48 show a composition bias toward gly residues; sequence GARGPGVSGGRGRAGGA. GTP contacts are provided by residues 59-66, 106-110, and 164-167; these read GDGAVGKT, DTAGQ, and TQSD. Glycyl lysine isopeptide (Lys-Gly) (interchain with G-Cter in ubiquitin) cross-links involve residues lysine 180 and lysine 251. Cysteine 259 carries S-palmitoyl cysteine lipidation.

Belongs to the small GTPase superfamily. Rho family. As to quaternary structure, interacts with PAK1. Interacts with PAK3. Interacts with ARHGAP30 in a GTP-independent manner. In its GTP-loaded conformation, interacts with ARHGAP31. Interacts with PTK2B/PYK2. Interacts with PAK4; interaction protects RHOU from ubiquitination and subsequent degradation. The cofactor is Mg(2+). Tyrosine phosphorylated by SRC in response to PTK2B/PYK2 activation. Post-translationally, ubiquitinated. 'Lys-48'-linked ubiquitination at Lys-180 and Lys-251 by the ECS(RAB40A) complex leading to its degradation.

It localises to the cell membrane. Its subcellular location is the golgi apparatus membrane. It is found in the cell junction. The protein localises to the focal adhesion. The protein resides in the cell projection. It localises to the podosome. Its function is as follows. Binds to and activates protein kinase PAK1. Plays a role in the regulation of cell morphology, cytoskeletal organization and focal adhesion assembly during cell migration. Also stimulates quiescent cells to reenter the cell cycle. Has no detectable GTPase activity but its high intrinsic guanine nucleotide exchange activity suggests it is constitutively GTP-bound. The polypeptide is Rho-related GTP-binding protein RhoU (Mus musculus (Mouse)).